The sequence spans 117 residues: UPF0231 protein HI_1724 (117 aa).

Belongs to the UPF0231 family.

In Haemophilus influenzae (strain ATCC 51907 / DSM 11121 / KW20 / Rd), this protein is UPF0231 protein HI_1724.